Reading from the N-terminus, the 605-residue chain is Progranulin (605 aa).

The N-terminal stretch at 1–17 is a signal peptide; that stretch reads MWTLVGWTILVAGLVAG. Disulfide bonds link C126–C139 and C133–C149. Residue N197 is glycosylated (N-linked (GlcNAc...) asparagine). Cystine bridges form between C297/C309, C303/C319, C310/C327, C320/C334, C328/C341, and C335/C348. The segment at 359-386 is disordered; sequence QKTPAQPSRPSQPSPPGPPGPPSPPGPL. Residues 368 to 385 are compositionally biased toward pro residues; that stretch reads PSQPSPPGPPGPPSPPGP. 2 disulfides stabilise this stretch: C392–C404 and C398–C414.

This sequence belongs to the granulin family. In terms of assembly, progranulin is secreted as a homodimer. Interacts with SLPI; interaction protects progranulin from proteolysis. Interacts (via region corresponding to granulin-7 peptide) with CTSD; stabilizes CTSD and increases its proteolytic activity. Interacts (via region corresponding to granulin-7 peptide) with SORT1; this interaction mediates endocytosis and lysosome delivery of progranulin; interaction occurs at the neuronal cell surface in a stressed nervous system. Interacts with PSAP; facilitates lysosomal delivery of progranulin from the extracellular space and the biosynthetic pathway. Forms a complex with PSAP and M6PR; PSAP bridges the binding between progranulin and M6PR. Forms a complex with PSAP and SORT1; progranulin bridges the interaction between PSAP and SORT1; facilitates lysosomal targeting of PSAP via SORT1; interaction enhances PSAP uptake in primary cortical neurons. Interacts (via regions corresponding to granulin-2 and granulin-7 peptides) with GBA1; this interaction prevents aggregation of GBA1-SCARB2 complex via interaction with HSPA1A upon stress. Interacts (via region corresponding to granulin-7 peptide) with HSPA1A; mediates recruitment of HSPA1A to GBA1 and prevents GBA1 aggregation in response to stress. Cleaved by ELANE; proteolysis is blocked by SLPI and is concentration- and time-dependent and induces CXCL8/IL-8 production; granulin-3 and granulin-4 are resistant to ELANE. Cleaved by CTSL in lysosome thus regulating the maturation and turnover of progranulin within the lysosome.

It localises to the secreted. It is found in the lysosome. In terms of biological role, secreted protein that acts as a key regulator of lysosomal function and as a growth factor involved in inflammation, wound healing and cell proliferation. Regulates protein trafficking to lysosomes, and also the activity of lysosomal enzymes. Also facilitates the acidification of lysosomes, causing degradation of mature CTSD by CTSB. In addition, functions as a wound-related growth factor that acts directly on dermal fibroblasts and endothelial cells to promote division, migration and the formation of capillary-like tubule structures. Also promotes epithelial cell proliferation by blocking TNF-mediated neutrophil activation preventing release of oxidants and proteases. Moreover, modulates inflammation in neurons by preserving neurons survival, axonal outgrowth and neuronal integrity. Its function is as follows. Inhibits epithelial cell proliferation and induces epithelial cells to secrete IL-8. Stabilizes CTSD through interaction with CTSD leading to maintain its aspartic-type peptidase activity. The polypeptide is Progranulin (GRN) (Cavia porcellus (Guinea pig)).